The primary structure comprises 101 residues: Small ribosomal subunit protein uS14 (101 aa).

It belongs to the universal ribosomal protein uS14 family. Part of the 30S ribosomal subunit. Contacts proteins S3 and S10.

In terms of biological role, binds 16S rRNA, required for the assembly of 30S particles and may also be responsible for determining the conformation of the 16S rRNA at the A site. The sequence is that of Small ribosomal subunit protein uS14 from Paraburkholderia phytofirmans (strain DSM 17436 / LMG 22146 / PsJN) (Burkholderia phytofirmans).